The chain runs to 368 residues: Mitogen-activated protein kinase 7 (368 aa).

Positions 32–319 (YVPIKPIGRG…VTDALLHPYM (288 aa)) constitute a Protein kinase domain. Residues 38 to 46 (IGRGAYGVV) and Lys61 each bind ATP. Asp158 acts as the Proton acceptor in catalysis. The residue at position 191 (Thr191) is a Phosphothreonine. The short motif at 191–193 (TEY) is the TXY element. At Tyr193 the chain carries Phosphotyrosine. At Thr196 the chain carries Phosphothreonine.

This sequence belongs to the protein kinase superfamily. CMGC Ser/Thr protein kinase family. MAP kinase subfamily. As to quaternary structure, interacts with MKK3. The cofactor is Mg(2+). Post-translationally, dually phosphorylated on Thr-191 and Tyr-193, which activates the enzyme.

It catalyses the reaction L-seryl-[protein] + ATP = O-phospho-L-seryl-[protein] + ADP + H(+). The enzyme catalyses L-threonyl-[protein] + ATP = O-phospho-L-threonyl-[protein] + ADP + H(+). Activated by threonine and tyrosine phosphorylation. Activated in response to hydrogen peroxide. Activation is triggered by MAPKKK17 and MAPKKK18 in a MKK3-dependent manner. MKK3-MPK7 module acts as a positive regulator of PR1 gene expression. The protein is Mitogen-activated protein kinase 7 (MPK7) of Arabidopsis thaliana (Mouse-ear cress).